The following is a 219-amino-acid chain: ATP-dependent Clp protease proteolytic subunit (219 aa).

Serine 101 serves as the catalytic Nucleophile. Residue histidine 126 is part of the active site.

The protein belongs to the peptidase S14 family. Component of the chloroplastic Clp protease core complex.

It is found in the plastid. It localises to the chloroplast stroma. It catalyses the reaction Hydrolysis of proteins to small peptides in the presence of ATP and magnesium. alpha-casein is the usual test substrate. In the absence of ATP, only oligopeptides shorter than five residues are hydrolyzed (such as succinyl-Leu-Tyr-|-NHMec, and Leu-Tyr-Leu-|-Tyr-Trp, in which cleavage of the -Tyr-|-Leu- and -Tyr-|-Trp bonds also occurs).. Cleaves peptides in various proteins in a process that requires ATP hydrolysis. Has a chymotrypsin-like activity. Plays a major role in the degradation of misfolded proteins. The protein is ATP-dependent Clp protease proteolytic subunit of Chara vulgaris (Common stonewort).